Here is a 495-residue protein sequence, read N- to C-terminus: MSKLNELGLAEARDALRAGETTSKDLTEACLTAIEEAGVLNAFVHHTADLALERAAAADARLAQGAAPAMCGLPIGMKDLFCTKGVASQAGSRILEGFLPEYESTVSQNLVDAGAVMLGKLNMDEFAMGSSNETSIYGDVINPWRRKDDEKPLTPGGSSGGSAAAVAADLCLAATGTDTGGSIRQPAAFTGTVGIKPTYGRCSRWGIVAFASSLDQAGPMTKSVRDAAIMLEAMSGHDPKDSTSADLAVPDFEAALSGDIRGKKIGIPKEYRMDGMPDEIEALWQTGIAMMKDAGAEIIDISLPHTKYALPAYYVIAPAEASSNLARYDGVRYGHRAKLDQGDGITEMYEKTRAEGFGPEVQRRVMVGTYVLSAGFYDAYYNRARKVRTLIKQDFETVFAQGVDAILTPATPSAAFGLGEMTDADPVAMYLNDIFTVTVNLAGLPGIAVPGGLDANGLPLGLQLIGRPWEEAELLNTAYALEQAVGFVAKPQKWW.

Catalysis depends on charge relay system residues K78 and S158. S182 acts as the Acyl-ester intermediate in catalysis.

Belongs to the amidase family. GatA subfamily. As to quaternary structure, heterotrimer of A, B and C subunits.

The catalysed reaction is L-glutamyl-tRNA(Gln) + L-glutamine + ATP + H2O = L-glutaminyl-tRNA(Gln) + L-glutamate + ADP + phosphate + H(+). Functionally, allows the formation of correctly charged Gln-tRNA(Gln) through the transamidation of misacylated Glu-tRNA(Gln) in organisms which lack glutaminyl-tRNA synthetase. The reaction takes place in the presence of glutamine and ATP through an activated gamma-phospho-Glu-tRNA(Gln). The protein is Glutamyl-tRNA(Gln) amidotransferase subunit A of Roseobacter denitrificans (strain ATCC 33942 / OCh 114) (Erythrobacter sp. (strain OCh 114)).